We begin with the raw amino-acid sequence, 591 residues long: L-fucose isomerase (591 aa).

Catalysis depends on proton acceptor residues glutamate 337 and aspartate 361. Mn(2+) contacts are provided by glutamate 337, aspartate 361, and histidine 528.

This sequence belongs to the L-fucose isomerase family. In terms of assembly, homohexamer. Mn(2+) serves as cofactor.

Its subcellular location is the cytoplasm. It catalyses the reaction L-fucose = L-fuculose. It functions in the pathway carbohydrate degradation; L-fucose degradation; L-lactaldehyde and glycerone phosphate from L-fucose: step 1/3. Functionally, converts the aldose L-fucose into the corresponding ketose L-fuculose. This is L-fucose isomerase from Salmonella typhi.